Reading from the N-terminus, the 439-residue chain is Chromosomal replication initiator protein DnaA (439 aa).

The domain I, interacts with DnaA modulators stretch occupies residues 1–75 (MESWSRCLER…GIREVVLAIG (75 aa)). Residues 75-101 (GSRPKTTELTVPVDTTGRLSQTVPFNG) are domain II. A domain III, AAA+ region region spans residues 102–319 (NLDTHYNFDN…GALNTLVARA (218 aa)). Residues Gly-147, Gly-149, Lys-150, and Thr-151 each contribute to the ATP site. Residues 320-439 (NFTGRAVTIE…WDKLMRKFSE (120 aa)) are domain IV, binds dsDNA.

The protein belongs to the DnaA family. In terms of assembly, oligomerizes as a right-handed, spiral filament on DNA at oriC.

Its subcellular location is the cytoplasm. Plays an essential role in the initiation and regulation of chromosomal replication. ATP-DnaA binds to the origin of replication (oriC) to initiate formation of the DNA replication initiation complex once per cell cycle. Binds the DnaA box (a 9 base pair repeat at the origin) and separates the double-stranded (ds)DNA. Forms a right-handed helical filament on oriC DNA; dsDNA binds to the exterior of the filament while single-stranded (ss)DNA is stabiized in the filament's interior. The ATP-DnaA-oriC complex binds and stabilizes one strand of the AT-rich DNA unwinding element (DUE), permitting loading of DNA polymerase. After initiation quickly degrades to an ADP-DnaA complex that is not apt for DNA replication. Binds acidic phospholipids. This is Chromosomal replication initiator protein DnaA from Xylella fastidiosa (strain Temecula1 / ATCC 700964).